Here is a 102-residue protein sequence, read N- to C-terminus: Class I hydrophobin 1 (102 aa).

An N-terminal signal peptide occupies residues 1-18 (MSLFKILVAAATVATALA). Intrachain disulfides connect Cys-37–Cys-84, Cys-45–Cys-78, Cys-46–Cys-63, and Cys-85–Cys-97.

Belongs to the fungal hydrophobin family.

The protein resides in the secreted. It is found in the cell wall. Its function is as follows. Aerial growth, conidiation, and dispersal of filamentous fungi in the environment rely upon a capability of their secreting small amphipathic proteins called hydrophobins (HPBs) with low sequence identity. Class I can self-assemble into an outermost layer of rodlet bundles on aerial cell surfaces, conferring cellular hydrophobicity that supports fungal growth, development and dispersal; whereas Class II form highly ordered films at water-air interfaces through intermolecular interactions but contribute nothing to the rodlet structure. Hyd1 is essential for stress tolerance, conidial hydrophobicity, adhesion to insect cuticle, and insect infectivity/pathogenicity. Plays a neglectable role in hyphal growth and asexual development. The polypeptide is Class I hydrophobin 1 (Metarhizium robertsii (strain ARSEF 23 / ATCC MYA-3075) (Metarhizium anisopliae (strain ARSEF 23))).